Here is a 208-residue protein sequence, read N- to C-terminus: Dephospho-CoA kinase (208 aa).

Residues 3-208 (EIGLTGGIGS…ALSAAGVTQA (206 aa)) form the DPCK domain. 11–16 (GSGKTR) provides a ligand contact to ATP.

Belongs to the CoaE family.

The protein resides in the cytoplasm. The catalysed reaction is 3'-dephospho-CoA + ATP = ADP + CoA + H(+). It participates in cofactor biosynthesis; coenzyme A biosynthesis; CoA from (R)-pantothenate: step 5/5. Functionally, catalyzes the phosphorylation of the 3'-hydroxyl group of dephosphocoenzyme A to form coenzyme A. The polypeptide is Dephospho-CoA kinase (Cupriavidus pinatubonensis (strain JMP 134 / LMG 1197) (Cupriavidus necator (strain JMP 134))).